The chain runs to 415 residues: Multidrug resistance protein MdtA (415 aa).

The signal sequence occupies residues methionine 1–alanine 21. The span at aspartate 31–proline 47 shows a compositional bias: polar residues. Disordered stretches follow at residues aspartate 31 to alanine 60 and glutamate 392 to serine 415. Residues serine 399–serine 415 show a composition bias toward basic and acidic residues.

This sequence belongs to the membrane fusion protein (MFP) (TC 8.A.1) family. Part of a tripartite efflux system composed of MdtA, MdtB and MdtC.

The protein localises to the cell inner membrane. Its function is as follows. The MdtABC tripartite complex confers resistance against novobiocin and deoxycholate. This chain is Multidrug resistance protein MdtA, found in Escherichia coli O139:H28 (strain E24377A / ETEC).